Consider the following 129-residue polypeptide: Chromatin accessibility complex protein 1 (129 aa).

Position 2 is an N-acetylalanine (Ala2). Lys102 is modified (N6-acetyllysine). Residues 104–120 are a coiled coil; the sequence is LKMLKEKREEEEDNEDD. Positions 109–129 are disordered; sequence EKREEEEDNEDDGSDLGEALA. The segment covering 112–123 has biased composition (acidic residues); the sequence is EEEEDNEDDGSD. Position 122 is a phosphoserine (Ser122).

Heterodimer with POLE3; binds to DNA. Component of the CHRAC ISWI chromatin remodeling complex at least composed of SMARCA5/SNF2H, BAZ1A/ACF1, CHRAC1 and POLE3; the complex preferentially binds DNA through the CHRAC1-POLE3 heterodimer and possesses ATP-dependent nucleosome-remodeling activity. Within the complex, the heterodimer with POLE3 interacts with SMARCA5/SNF2H; the interaction is direct and enhances nucleosome sliding activity by the SMARCA5/SNF2H and BAZ1A/ACF1 interaction. Within the complex, the heterodimer with POLE3 interacts with BAZ1A/ACF1; the interactions are direct. In terms of tissue distribution, ubiquitously expressed.

The protein localises to the nucleus. Its function is as follows. Forms a complex with DNA polymerase epsilon subunit POLE3 and binds naked DNA, which is then incorporated into chromatin, aided by the nucleosome remodeling activity of ISWI/SNF2H and ACF1. Does not enhance nucleosome sliding activity of the ACF-5 ISWI chromatin remodeling complex. The sequence is that of Chromatin accessibility complex protein 1 (Chrac1) from Mus musculus (Mouse).